A 246-amino-acid polypeptide reads, in one-letter code: PF03932 family protein CutC (246 aa).

The protein belongs to the CutC family.

Its subcellular location is the cytoplasm. In Treponema denticola (strain ATCC 35405 / DSM 14222 / CIP 103919 / JCM 8153 / KCTC 15104), this protein is PF03932 family protein CutC.